The chain runs to 317 residues: MPVNSTAVSWTSVTYITVEILIGLCAIVGNVLVIWVVKLNPSLQTTTFYFIVSLALADIAVGVLVMPLAIVISLGVTIHFYSCLFMTCLMLIFTHASIMSLLAIAVDRYLRVKLTVRYRRVTTQRRIWLALGLCWLVSFLVGLTPMFGWNMKLSSADENLTFLPCRFRSVMRMDYMVYFSFFLWILVPLVVMCAIYFDIFYIIRNRLSQSFSGSRETGAFYGREFKTAKSLLLVLFLFALCWLPLSIINCILYFDGQVPQTVLYLGILLSHANSMMNPIVYAYKIKKFKETYLLILKACVMCQPSKSMDPSTEQTSE.

At 1-14 the chain is on the extracellular side; it reads MPVNSTAVSWTSVT. N4 is a glycosylation site (N-linked (GlcNAc...) asparagine). A helical membrane pass occupies residues 15-37; that stretch reads YITVEILIGLCAIVGNVLVIWVV. At 38-48 the chain is on the cytoplasmic side; sequence KLNPSLQTTTF. Residues 49-72 traverse the membrane as a helical segment; the sequence is YFIVSLALADIAVGVLVMPLAIVI. Topologically, residues 73–84 are extracellular; sequence SLGVTIHFYSCL. C83 and C165 are oxidised to a cystine. The helical transmembrane segment at 85–106 threads the bilayer; the sequence is FMTCLMLIFTHASIMSLLAIAV. Over 107-126 the chain is Cytoplasmic; that stretch reads DRYLRVKLTVRYRRVTTQRR. Residues 127 to 148 traverse the membrane as a helical segment; it reads IWLALGLCWLVSFLVGLTPMFG. Residues 149-176 are Extracellular-facing; it reads WNMKLSSADENLTFLPCRFRSVMRMDYM. The N-linked (GlcNAc...) asparagine glycan is linked to N159. A helical transmembrane segment spans residues 177-197; that stretch reads VYFSFFLWILVPLVVMCAIYF. Residues 198 to 230 are Cytoplasmic-facing; sequence DIFYIIRNRLSQSFSGSRETGAFYGREFKTAKS. A helical transmembrane segment spans residues 231-254; the sequence is LLLVLFLFALCWLPLSIINCILYF. The Extracellular segment spans residues 255 to 260; sequence DGQVPQ. The helical transmembrane segment at 261 to 283 threads the bilayer; the sequence is TVLYLGILLSHANSMMNPIVYAY. Over 284–317 the chain is Cytoplasmic; the sequence is KIKKFKETYLLILKACVMCQPSKSMDPSTEQTSE. C302 is lipidated: S-palmitoyl cysteine.

Belongs to the G-protein coupled receptor 1 family. In terms of processing, phosphorylation on Thr-315 and Ser-316 may be crucial for rapid desensitization. Phosphorylation on Thr-315 may be necessary for phosphorylation on Ser-316 to occur. Most abundant in lung, spleen and pineal gland. Moderate expression in brain, kidney and testis.

It is found in the cell membrane. Receptor for adenosine. The activity of this receptor is mediated by G proteins which inhibits adenylyl cyclase. The chain is Adenosine receptor A3 (ADORA3) from Ovis aries (Sheep).